A 215-amino-acid polypeptide reads, in one-letter code: MATTPYNYSYIFKYIIIGDMGVGKSCLLHQFTEKKFMADCPHTIGVEFGTRIIEVSGQKIKLQIWDTAGQERFRAVTRSYYRGAAGALMVYDITRRSTYNHLSSWLTDARNLTNPNTVIILIGNKADLEAQRDVTYEEAKQFAEENGLLFLEASAKTGENVEDAFLEAAKKIYQNIQDGSLDLNAAESGVQHKPSAPQGGRLTSEPQPQREGCGC.

N-acetylalanine is present on A2. Residues G21, V22, G23, K24, S25, C26, A38, D39, C40, H42, and T43 each coordinate GTP. S25 is a binding site for Mg(2+). A Switch 1 motif is present at residues 42–47 (HTIGVE). T43 and D66 together coordinate Mg(2+). The Switch 2 signature appears at 68-77 (AGQERFRAVT). Residues G69, N124, K125, D127, A155, and K156 each coordinate GTP. The disordered stretch occupies residues 188–215 (SGVQHKPSAPQGGRLTSEPQPQREGCGC). 2 S-geranylgeranyl cysteine lipidation sites follow: C213 and C215. Residue C215 is modified to Cysteine methyl ester.

The protein belongs to the small GTPase superfamily. Rab family. In terms of assembly, interacts with ZFYVE20. Interacts with KIF16B. Interacts (GTP-bound form) with RUFY1; the interaction recruits RUFY1 onto endosomal membranes. Interacts (GTP-bound form) with RAB11FIP1 (via its C-terminus); the interactions doesn't mediate RAB11FIP1 rectruitment to membranes. Interacts with RAB11FIP2. Requires Mg(2+) as cofactor.

The protein localises to the recycling endosome. Its subcellular location is the early endosome membrane. It is found in the golgi apparatus membrane. The protein resides in the golgi apparatus. It localises to the trans-Golgi network membrane. The protein localises to the cytoplasmic vesicle. Its subcellular location is the phagosome. It catalyses the reaction GTP + H2O = GDP + phosphate + H(+). With respect to regulation, regulated by guanine nucleotide exchange factors (GEFs) including DENND6A and DENND6B which promote the exchange of bound GDP for free GTP. Regulated by GTPase activating proteins (GAPs) which increase the GTP hydrolysis activity. Inhibited by GDP dissociation inhibitors (GDIs) which prevent Rab-GDP dissociation. Functionally, the small GTPases Rab are key regulators of intracellular membrane trafficking, from the formation of transport vesicles to their fusion with membranes. Rabs cycle between an inactive GDP-bound form and an active GTP-bound form that is able to recruit to membranes different set of downstream effectors directly responsible for vesicle formation, movement, tethering and fusion. Involved in membrane trafficking between the Golgi complex and endosomes during early embryonic development. Regulates the Golgi to endosome transport of FGFR-containing vesicles during early development, a key process for developing basement membrane and epiblast and primitive endoderm lineages during early postimplantation development. May act by modulating the kinesin KIF16B-cargo association to endosomes. Regulates, together with its guanine nucleotide exchange factor DENND6A, the specific endocytic transport of ADAM10, N-cadherin/CDH2 shedding and cell-cell adhesion. Mediates endosomal tethering and fusion through the interaction with RUFY1 and RAB4B. Interaction with RAB11FIP1 may function in the process of neurite formation. The polypeptide is Ras-related protein Rab-14 (RAB14) (Sus scrofa (Pig)).